We begin with the raw amino-acid sequence, 999 residues long: Hypoxia up-regulated protein 1 (999 aa).

The first 32 residues, 1 to 32 (MAATVRRQRPRRLLCWALVAVLLADLLALSDT), serve as a signal peptide directing secretion. N-linked (GlcNAc...) asparagine glycosylation is found at Asn155, Asn222, and Asn515. A disordered region spans residues 564–694 (VEDSPEEEST…KKQKPARKQK (131 aa)). A Phosphoserine modification is found at Ser567. Over residues 574 to 583 (LTKLGNTISS) the composition is skewed to polar residues. A glycan (N-linked (GlcNAc...) asparagine) is linked at Asn596. 2 stretches are compositionally biased toward basic and acidic residues: residues 611–626 (GSKD…KEEA) and 641–668 (PKGD…KPNE). Residues Asn830, Asn862, and Asn869 are each glycosylated (N-linked (GlcNAc...) asparagine). An N6-acetyllysine modification is found at Lys883. A disordered region spans residues 909 to 999 (AKFTKPRPRP…QKRPLKNDEL (91 aa)). Asn922 and Asn931 each carry an N-linked (GlcNAc...) asparagine glycan. The segment covering 949–962 (EEAKAILEPDKEGL) has biased composition (basic and acidic residues). The Prevents secretion from ER motif lies at 996-999 (NDEL).

Belongs to the heat shock protein 70 family. Part of a large chaperone multiprotein complex comprising DNAJB11, HSP90B1, HSPA5, HYOU, PDIA2, PDIA4, PDIA6, PPIB, SDF2L1, UGGT1 and very small amounts of ERP29, but not, or at very low levels, CALR nor CANX. Selectively expressed by cultured astrocytes but not endothelial cells, microglia or neurons.

Its subcellular location is the endoplasmic reticulum lumen. Its function is as follows. Has a pivotal role in cytoprotective cellular mechanisms triggered by oxygen deprivation. Promotes HSPA5/BiP-mediated ATP nucleotide exchange and thereby activates the unfolded protein response (UPR) pathway in the presence of endoplasmic reticulum stress. May play a role as a molecular chaperone and participate in protein folding. The protein is Hypoxia up-regulated protein 1 (Hyou1) of Rattus norvegicus (Rat).